The chain runs to 732 residues: Cullin-3B (732 aa).

The region spanning Asp-662 to Asp-724 is the Cullin neddylation domain. Residue Lys-676 forms a Glycyl lysine isopeptide (Lys-Gly) (interchain with G-Cter in NEDD8) linkage.

Belongs to the cullin family. Interacts with BTB/POZ-MATH proteins BPM1 and BPM3. In terms of processing, neddylated. Deneddylated via its interaction with the COP9 signalosome (CSN) complex.

It functions in the pathway protein modification; protein ubiquitination. Functionally, component of the cullin-RING ubiquitin ligases (CRL), or CUL3-RBX1-BTB protein E3 ligase complexes which mediate the ubiquitination and subsequent proteasomal degradation of target proteins. The functional specificity of the CRL complex depends on the BTB domain-containing protein as the substrate recognition component. Involved in embryo pattern formation and endosperm development. Required for the normal division and organization of the root stem cells and columella root cap cells. Regulates primary root growth by an unknown pathway, but in an ethylene-dependent manner. Functions in distal root patterning, by an ethylene-independent mechanism. Functionally redundant with CUL3A. This is Cullin-3B (CUL3B) from Arabidopsis thaliana (Mouse-ear cress).